Consider the following 281-residue polypeptide: MEPLDTELCYDPDPSIVQPSCNGQTPPGHRTLSPTQQMDHEQQMKISESGQFSDVVENRGLLESSTRLKPHEAQNYRKKALWVSWLSIAITLILAIAAFTVSVMRYSASSFGFALDAVLDVLSSAIVLWRYSNAAAVHSAHREYMACCILGVIFLLSSICIVSKAIHDLSIRVMPEVDGFLFSVSILSGILCSLLAAIKFMLGKVLTSRALITDGFNSLVGGIMGFSILLSAEVYKHNSKVWYLDGSVGILIGLIIMSYGIKLLMDMVPRVRQTRHYEMFE.

Over 1-80 the chain is Cytoplasmic; sequence MEPLDTELCY…HEAQNYRKKA (80 aa). Residues 16 to 44 form a disordered region; the sequence is IVQPSCNGQTPPGHRTLSPTQQMDHEQQM. The chain crosses the membrane as a helical span at residues 81-101; it reads LWVSWLSIAITLILAIAAFTV. Residues 102-108 are Extracellular-facing; it reads SVMRYSA. A helical membrane pass occupies residues 109–129; the sequence is SSFGFALDAVLDVLSSAIVLW. Topologically, residues 130 to 145 are cytoplasmic; the sequence is RYSNAAAVHSAHREYM. Residues 146–166 traverse the membrane as a helical segment; sequence ACCILGVIFLLSSICIVSKAI. The Extracellular portion of the chain corresponds to 167 to 179; the sequence is HDLSIRVMPEVDG. The chain crosses the membrane as a helical span at residues 180-200; sequence FLFSVSILSGILCSLLAAIKF. Residues 201–209 lie on the Cytoplasmic side of the membrane; it reads MLGKVLTSR. Residues 210–230 form a helical membrane-spanning segment; sequence ALITDGFNSLVGGIMGFSILL. At 231-240 the chain is on the extracellular side; that stretch reads SAEVYKHNSK. A helical transmembrane segment spans residues 241 to 261; the sequence is VWYLDGSVGILIGLIIMSYGI. The Cytoplasmic segment spans residues 262–281; it reads KLLMDMVPRVRQTRHYEMFE.

It belongs to the TMEM163 family.

It is found in the cytoplasmic vesicle. Its subcellular location is the secretory vesicle. The protein resides in the synaptic vesicle membrane. The protein localises to the early endosome membrane. In terms of biological role, may bind zinc and other divalent cations and recruit them to vesicular organelles. The polypeptide is Transmembrane protein 163 (tmem163) (Xenopus laevis (African clawed frog)).